Here is a 165-residue protein sequence, read N- to C-terminus: Small ribosomal subunit protein uS17m (165 aa).

This sequence belongs to the universal ribosomal protein uS17 family. Component of the mitochondrial small ribosomal subunit (mt-SSU). Mature N.crassa 74S mitochondrial ribosomes consist of a small (37S) and a large (54S) subunit. The 37S small subunit contains a 16S ribosomal RNA (16S mt-rRNA) and 32 different proteins. The 54S large subunit contains a 23S rRNA (23S mt-rRNA) and 42 different proteins. uS17m interacts with the F(1)-ATPase inhibitor IF(1) dimer.

The protein resides in the mitochondrion. Functionally, component of the mitochondrial ribosome (mitoribosome), a dedicated translation machinery responsible for the synthesis of mitochondrial genome-encoded proteins, including at least some of the essential transmembrane subunits of the mitochondrial respiratory chain. The mitoribosomes are attached to the mitochondrial inner membrane and translation products are cotranslationally integrated into the membrane. The sequence is that of Small ribosomal subunit protein uS17m (mrps17) from Neurospora crassa (strain ATCC 24698 / 74-OR23-1A / CBS 708.71 / DSM 1257 / FGSC 987).